A 150-amino-acid polypeptide reads, in one-letter code: Small ribosomal subunit protein uS13 (150 aa).

This sequence belongs to the universal ribosomal protein uS13 family. In terms of assembly, part of the 30S ribosomal subunit. Forms a loose heterodimer with protein S19. Forms two bridges to the 50S subunit in the 70S ribosome.

Located at the top of the head of the 30S subunit, it contacts several helices of the 16S rRNA. In the 70S ribosome it contacts the 23S rRNA (bridge B1a) and protein L5 of the 50S subunit (bridge B1b), connecting the 2 subunits; these bridges are implicated in subunit movement. The protein is Small ribosomal subunit protein uS13 of Aeropyrum pernix (strain ATCC 700893 / DSM 11879 / JCM 9820 / NBRC 100138 / K1).